The sequence spans 993 residues: Signal peptide, CUB and EGF-like domain-containing protein 3 (993 aa).

Residues 1–20 (MGSGRVPGLCLLVLLVHARA) form the signal peptide. Residues 29 to 69 (DVDECVEGTDNCHIDAICQNTPRSYKCICKSGYTGDGKHCK) form the EGF-like 1; calcium-binding domain. Disulfide bonds link C33-C46, C40-C55, C57-C68, C74-C86, C82-C95, C97-C110, C116-C127, C123-C136, C161-C172, C168-C182, C184-C197, C201-C212, C208-C221, C223-C236, C240-C251, C247-C260, C262-C275, C281-C292, C288-C301, C303-C316, C322-C332, C328-C341, C343-C355, C361-C372, C368-C381, and C383-C397. In terms of domain architecture, EGF-like 2; calcium-binding spans 70–111 (DVDECEREDNAGCVHDCVNIPGNYRCTCYDGFHLAHDGHNCL). The region spanning 112 to 148 (DVDECAEGNGGCQQSCVNMMGSYECHCREGFFLSDNQ) is the EGF-like 3; calcium-binding domain. 3 EGF-like domains span residues 157 to 198 (EGMN…RDCK), 199 to 237 (LTCNYGNGGCQHTCDDTEQGPRCGCHIKFVLHTDGKTCI), and 238 to 276 (ETCAVNNGGCDSKCHDAATGVHCTCPVGFMLQPDRKTCK). Residues 277 to 317 (DIDECRLNNGGCDHICRNTVGSFECSCKKGYKLLINERNCQ) form the EGF-like 7; calcium-binding domain. The region spanning 318–356 (DIDECSFDRTCDHICVNTPGSFQCLCHRGYLLYGITHCG) is the EGF-like 8; calcium-binding domain. Positions 357 to 398 (DVDECSINRGGCRFGCINTPGSYQCTCPAGQGRLHWNGKDCT) constitute an EGF-like 9; calcium-binding domain. N417, N464, N685, N756, and N785 each carry an N-linked (GlcNAc...) asparagine glycan. Intrachain disulfides connect C804–C830 and C857–C878. Positions 804–916 (CGGELGEFTG…RGFQIPYVTY (113 aa)) constitute a CUB domain.

In terms of assembly, forms homooligomers. Forms heterooligomers with SCUBE1 and SCUBE2. Interacts with TGFBR2 through the CUB domain; this interaction does not affect TGFB1-binding to TGFBR2. Interacts with BMP2, BMP4 and BMP7; the interaction is mediated by the CUB domain. Interacts with BMPR1A, BMPR1B and BMPR2; the interaction with BMPR1A and BMPR1B is BMP2- and BMP4-dependent. N-glycosylated. In terms of processing, proteolytic cleavage produces a CUB-containing C-terminal fragment that retains the ability to bind to TGFBR2. This reaction is catalyzed in vitro by MMP2 and, to a lesser extent, by MMP9. Highly expressed in osteoblasts. In normal lung, mainly expressed in bronchial epithelial cells. Tends to be up-regulated in lung cancer cells.

Its subcellular location is the secreted. It is found in the cell surface. In terms of biological role, is a positive regulator of the BMP signaling pathway, required for proper chondrogenesis, osteogenesis and skeletal development. It acts as a coreceptor for BMP ligands, particularly BMP2 and BMP4, facilitating their interactions with BMP type I receptors. It is required for ligand-induced recruitment of BMP receptors to lipid rafts. Binds to TGFBR2 and activates TGFB signaling. In lung cancer cells, could serve as an endogenous autocrine and paracrine ligand of TGFBR2, which could regulate TGFBR2 signaling and hence modulate epithelial-mesenchymal transition and cancer progression. This is Signal peptide, CUB and EGF-like domain-containing protein 3 from Homo sapiens (Human).